The following is a 1537-amino-acid chain: DNA-directed RNA polymerase subunit beta' (1537 aa).

Positions 57, 59, 72, and 75 each coordinate Zn(2+). Mg(2+) contacts are provided by aspartate 746, aspartate 748, and aspartate 750. Cysteine 1120, cysteine 1201, cysteine 1208, and cysteine 1211 together coordinate Zn(2+). The segment at 1502 to 1537 (LEKYGQTSVSTDAVTGSQRYDDTRPSSTSINPSYGD) is disordered. 2 stretches are compositionally biased toward polar residues: residues 1506–1519 (GQTS…TGSQ) and 1526–1537 (PSSTSINPSYGD).

It belongs to the RNA polymerase beta' chain family. In terms of assembly, the RNAP catalytic core consists of 2 alpha, 1 beta, 1 beta' and 1 omega subunit. When a sigma factor is associated with the core the holoenzyme is formed, which can initiate transcription. It depends on Mg(2+) as a cofactor. Zn(2+) serves as cofactor.

The catalysed reaction is RNA(n) + a ribonucleoside 5'-triphosphate = RNA(n+1) + diphosphate. DNA-dependent RNA polymerase catalyzes the transcription of DNA into RNA using the four ribonucleoside triphosphates as substrates. This Deinococcus geothermalis (strain DSM 11300 / CIP 105573 / AG-3a) protein is DNA-directed RNA polymerase subunit beta'.